A 177-amino-acid chain; its full sequence is Small ribosomal subunit protein uS4 (177 aa).

In terms of domain architecture, S4 RNA-binding spans 104–166 (RRLQTIVYKK…PTSPFKQHPP (63 aa)). A disordered region spans residues 158–177 (TSPFKQHPPTQQGEENVQQA). Polar residues predominate over residues 165–177 (PPTQQGEENVQQA).

This sequence belongs to the universal ribosomal protein uS4 family. In terms of assembly, part of the 30S ribosomal subunit. Contacts protein S5. The interaction surface between S4 and S5 is involved in control of translational fidelity.

Its function is as follows. One of the primary rRNA binding proteins, it binds directly to 16S rRNA where it nucleates assembly of the body of the 30S subunit. In terms of biological role, with S5 and S12 plays an important role in translational accuracy. The chain is Small ribosomal subunit protein uS4 from Sulfurisphaera tokodaii (strain DSM 16993 / JCM 10545 / NBRC 100140 / 7) (Sulfolobus tokodaii).